A 363-amino-acid chain; its full sequence is Mitogen-activated protein kinase 4 (363 aa).

One can recognise a Protein kinase domain in the interval Tyr30–Phe318. ATP contacts are provided by residues Val36–Val44 and Lys59. Asp156 serves as the catalytic Proton acceptor. Phosphoserine is present on residues Ser186 and Ser187. Thr190 carries the post-translational modification Phosphothreonine; by MKK5. The TQY signature appears at Thr190–Tyr192. Tyr192 carries the post-translational modification Phosphotyrosine; by MKK5.

It belongs to the protein kinase superfamily. CMGC Ser/Thr protein kinase family. MAP kinase subfamily. It depends on Mg(2+) as a cofactor. Post-translationally, dually phosphorylated on Thr-190 and Tyr-192, which activates the enzyme.

It carries out the reaction L-seryl-[protein] + ATP = O-phospho-L-seryl-[protein] + ADP + H(+). The catalysed reaction is L-threonyl-[protein] + ATP = O-phospho-L-threonyl-[protein] + ADP + H(+). Its function is as follows. Essential for the two main proliferating life stages, the promastigotes and amastigotes, of the parasite. In Leishmania mexicana, this protein is Mitogen-activated protein kinase 4.